Consider the following 123-residue polypeptide: Large ribosomal subunit protein bL12 (123 aa).

The protein belongs to the bacterial ribosomal protein bL12 family. In terms of assembly, homodimer. Part of the ribosomal stalk of the 50S ribosomal subunit. Forms a multimeric L10(L12)X complex, where L10 forms an elongated spine to which 2 to 4 L12 dimers bind in a sequential fashion. Binds GTP-bound translation factors.

Its function is as follows. Forms part of the ribosomal stalk which helps the ribosome interact with GTP-bound translation factors. Is thus essential for accurate translation. The protein is Large ribosomal subunit protein bL12 of Clostridium acetobutylicum (strain ATCC 824 / DSM 792 / JCM 1419 / IAM 19013 / LMG 5710 / NBRC 13948 / NRRL B-527 / VKM B-1787 / 2291 / W).